Consider the following 459-residue polypeptide: tRNA modification GTPase MnmE (459 aa).

Residues Arg23, Glu86, and Arg125 each coordinate (6S)-5-formyl-5,6,7,8-tetrahydrofolate. A TrmE-type G domain is found at Gly221–Val380. Position 231 (Asn231) interacts with K(+). Residues Asn231–Ser236, Thr250–Thr256, and Asp275–Gly278 contribute to the GTP site. Ser235 serves as a coordination point for Mg(2+). K(+) is bound by residues Thr250, Ile252, and Thr255. Thr256 contributes to the Mg(2+) binding site. Lys459 is a binding site for (6S)-5-formyl-5,6,7,8-tetrahydrofolate.

The protein belongs to the TRAFAC class TrmE-Era-EngA-EngB-Septin-like GTPase superfamily. TrmE GTPase family. In terms of assembly, homodimer. Heterotetramer of two MnmE and two MnmG subunits. K(+) is required as a cofactor.

The protein localises to the cytoplasm. Its function is as follows. Exhibits a very high intrinsic GTPase hydrolysis rate. Involved in the addition of a carboxymethylaminomethyl (cmnm) group at the wobble position (U34) of certain tRNAs, forming tRNA-cmnm(5)s(2)U34. This chain is tRNA modification GTPase MnmE, found in Acetivibrio thermocellus (strain ATCC 27405 / DSM 1237 / JCM 9322 / NBRC 103400 / NCIMB 10682 / NRRL B-4536 / VPI 7372) (Clostridium thermocellum).